The chain runs to 333 residues: Ferrochelatase (333 aa).

The Fe cation site is built by His202 and Glu284.

The protein belongs to the ferrochelatase family.

It is found in the cytoplasm. It carries out the reaction heme b + 2 H(+) = protoporphyrin IX + Fe(2+). It participates in porphyrin-containing compound metabolism; protoheme biosynthesis; protoheme from protoporphyrin-IX: step 1/1. Catalyzes the ferrous insertion into protoporphyrin IX. The protein is Ferrochelatase of Francisella tularensis subsp. tularensis (strain FSC 198).